We begin with the raw amino-acid sequence, 202 residues long: Imidazole glycerol phosphate synthase subunit HisH 2 (202 aa).

The region spanning 1-202 (MIVVIDYGVG…QLFKNFVELV (202 aa)) is the Glutamine amidotransferase type-1 domain. The active-site Nucleophile is C80. Residues H183 and E185 contribute to the active site.

As to quaternary structure, heterodimer of HisH and HisF.

It localises to the cytoplasm. The catalysed reaction is 5-[(5-phospho-1-deoxy-D-ribulos-1-ylimino)methylamino]-1-(5-phospho-beta-D-ribosyl)imidazole-4-carboxamide + L-glutamine = D-erythro-1-(imidazol-4-yl)glycerol 3-phosphate + 5-amino-1-(5-phospho-beta-D-ribosyl)imidazole-4-carboxamide + L-glutamate + H(+). The enzyme catalyses L-glutamine + H2O = L-glutamate + NH4(+). Its pathway is amino-acid biosynthesis; L-histidine biosynthesis; L-histidine from 5-phospho-alpha-D-ribose 1-diphosphate: step 5/9. In terms of biological role, IGPS catalyzes the conversion of PRFAR and glutamine to IGP, AICAR and glutamate. The HisH subunit catalyzes the hydrolysis of glutamine to glutamate and ammonia as part of the synthesis of IGP and AICAR. The resulting ammonia molecule is channeled to the active site of HisF. This chain is Imidazole glycerol phosphate synthase subunit HisH 2 (hisH2), found in Pseudomonas aeruginosa (strain ATCC 15692 / DSM 22644 / CIP 104116 / JCM 14847 / LMG 12228 / 1C / PRS 101 / PAO1).